The primary structure comprises 149 residues: Large ribosomal subunit protein uL15 (149 aa).

The interval 1–64 (MVELHDLQPH…GQTPLYMRIP (64 aa)) is disordered. Residues 31-40 (TAGRGHKGQK) show a composition bias toward basic residues.

Belongs to the universal ribosomal protein uL15 family. As to quaternary structure, part of the 50S ribosomal subunit.

Its function is as follows. Binds to the 23S rRNA. This chain is Large ribosomal subunit protein uL15, found in Aquifex aeolicus (strain VF5).